Here is a 294-residue protein sequence, read N- to C-terminus: Glycine N-acyltransferase-like protein 2 (294 aa).

Lysine 19 carries the post-translational modification N6-acetyllysine.

Belongs to the glycine N-acyltransferase family. In terms of processing, acetylation at Lys-19 drastically decreases the production of N-oleoyl and N-arachidonoyl glycines. In terms of tissue distribution, expressed at highest levels in salivary gland and trachea. Also detected in thyroid gland, spinal cord, prostate, lung and fetal brain.

The protein localises to the endoplasmic reticulum. It catalyses the reaction an acyl-CoA + glycine = an N-acylglycine + CoA + H(+). It carries out the reaction (9Z)-hexadecenoyl-CoA + glycine = N-(9Z-hexadecenoyl)-glycine + CoA + H(+). The enzyme catalyses octadecanoyl-CoA + glycine = N-octadecanoylglycine + CoA + H(+). The catalysed reaction is (5Z,8Z,11Z,14Z)-eicosatetraenoyl-CoA + glycine = N-(5Z,8Z,11Z,14Z)-eicosatetraenoyl-glycine + CoA + H(+). It catalyses the reaction (9Z)-octadecenoyl-CoA + glycine = N-(9Z-octadecenoyl)glycine + CoA + H(+). It carries out the reaction octanoyl-CoA + glycine = N-octanoylglycine + CoA + H(+). The enzyme catalyses decanoyl-CoA + glycine = N-decanoylglycine + CoA + H(+). The catalysed reaction is tetradecanoyl-CoA + glycine = N-tetradecanoylglycine + CoA + H(+). It catalyses the reaction dodecanoyl-CoA + glycine = N-dodecanoylglycine + CoA + H(+). It carries out the reaction (9Z,12Z)-octadecadienoyl-CoA + glycine = N-(9Z,12Z-octadecadienoyl)-glycine + CoA + H(+). The enzyme catalyses a fatty acyl-CoA + glycine = an N-(fatty acyl)-glycine + CoA + H(+). In terms of biological role, mitochondrial acyltransferase which transfers the acyl group to the N-terminus of glycine. Conjugates numerous substrates, such as arachidonoyl-CoA and saturated medium and long-chain acyl-CoAs ranging from chain-length C8:0-CoA to C18:0-CoA, to form a variety of N-acylglycines. Shows a preference for monounsaturated fatty acid oleoyl-CoA (C18:1-CoA) as an acyl donor. Does not exhibit any activity toward C22:6-CoA and chenodeoxycholoyl-CoA, nor toward serine or alanine. This Homo sapiens (Human) protein is Glycine N-acyltransferase-like protein 2.